Consider the following 360-residue polypeptide: DNA replication and repair protein RecF (360 aa).

Residue 30–37 coordinates ATP; it reads GQNGSGKT.

This sequence belongs to the RecF family.

It is found in the cytoplasm. In terms of biological role, the RecF protein is involved in DNA metabolism; it is required for DNA replication and normal SOS inducibility. RecF binds preferentially to single-stranded, linear DNA. It also seems to bind ATP. This chain is DNA replication and repair protein RecF, found in Shewanella sp. (strain MR-7).